A 399-amino-acid polypeptide reads, in one-letter code: MSSTTKVSSAVMQTYNRFPITATKGKGSFLWDDNGEKYLDYTSGIATCNLGHVPDNVQHAISNQLKDLWHCSNLYHIPSQEKLAALLTEYSCLDQVFFCNSGAEANEAAIKIAKKYAKDKGYDDRTEIITFEQSFHGRTGSTMAATAQEKIHQGFTPLTEGFRYLPFNNKESLSEIDNGKTSAVLLEVIQGEGGIHTAEKDWLKQLAAICKQADILLMIDEIQTGIGRTGSLFAYQPYGIEPDVITVAKGLGSGFPIGAMLAKQHIAASFSPGTHGSTFGGNPVAAAAGIATLKEILSDGFLENCKEGQEELFNQLKSIKEISPLIKDIRGKGYLMGIEVMNQASAWIEKLREKQILVLPAGEKVVRILPPLTTTKEELQICIQALKEVALELGGNTNG.

Residues 102–103 and Phe-135 contribute to the pyridoxal 5'-phosphate site; that span reads GA. Arg-138 serves as a coordination point for N(2)-acetyl-L-ornithine. Residue 220-223 coordinates pyridoxal 5'-phosphate; the sequence is DEIQ. At Lys-249 the chain carries N6-(pyridoxal phosphate)lysine. Residue Ser-277 coordinates N(2)-acetyl-L-ornithine. Residue Thr-278 coordinates pyridoxal 5'-phosphate.

This sequence belongs to the class-III pyridoxal-phosphate-dependent aminotransferase family. ArgD subfamily. Homodimer. It depends on pyridoxal 5'-phosphate as a cofactor.

It is found in the cytoplasm. It catalyses the reaction N(2)-acetyl-L-ornithine + 2-oxoglutarate = N-acetyl-L-glutamate 5-semialdehyde + L-glutamate. It functions in the pathway amino-acid biosynthesis; L-arginine biosynthesis; N(2)-acetyl-L-ornithine from L-glutamate: step 4/4. The chain is Acetylornithine aminotransferase from Oceanobacillus iheyensis (strain DSM 14371 / CIP 107618 / JCM 11309 / KCTC 3954 / HTE831).